The primary structure comprises 94 residues: Cell division topological specificity factor (94 aa).

Belongs to the MinE family.

In terms of biological role, prevents the cell division inhibition by proteins MinC and MinD at internal division sites while permitting inhibition at polar sites. This ensures cell division at the proper site by restricting the formation of a division septum at the midpoint of the long axis of the cell. In Acetivibrio thermocellus (strain ATCC 27405 / DSM 1237 / JCM 9322 / NBRC 103400 / NCIMB 10682 / NRRL B-4536 / VPI 7372) (Clostridium thermocellum), this protein is Cell division topological specificity factor.